The primary structure comprises 163 residues: Transcription elongation factor GreA (163 aa).

A coiled-coil region spans residues 12 to 73; sequence YEKIQKEFEA…ELSDLLARAQ (62 aa).

It belongs to the GreA/GreB family.

Its function is as follows. Necessary for efficient RNA polymerase transcription elongation past template-encoded arresting sites. The arresting sites in DNA have the property of trapping a certain fraction of elongating RNA polymerases that pass through, resulting in locked ternary complexes. Cleavage of the nascent transcript by cleavage factors such as GreA or GreB allows the resumption of elongation from the new 3'terminus. GreA releases sequences of 2 to 3 nucleotides. The chain is Transcription elongation factor GreA from Nitratiruptor sp. (strain SB155-2).